The chain runs to 144 residues: Large ribosomal subunit protein eL27 (144 aa).

It belongs to the eukaryotic ribosomal protein eL27 family.

It localises to the cytoplasm. In Tetrahymena thermophila, this protein is Large ribosomal subunit protein eL27 (RPL27).